Here is an 835-residue protein sequence, read N- to C-terminus: MIGILKKVFDVNQRQIKRMQKTVEQIDALESSIKPLTDEQLKGKTLEFKERLTKGETVDDLLPEAFAVVREAATRVLGMRPYGVQLMGGIALHEGNISEMKTGEGKTLTSTLPVYLNALTGKGVHVVTVNEYLAQRDASEMGQLHEFLGLTVGINLNSMSREEKQEAYAADITYSTNNELGFDYLRDNMGLYKEECVQRPLHFAIIDEVDSILVDEARTPLIISGQAQKSTELYMFANAFVRTLENEKDYSFDVKTKNVMLTEDGITKAEKAFHIENLFDLKHVALLHHINQGLRAHVVMHRDTDYVVQEGEIVIVDQFTGRLMKGRRYSEGLHQAIEAKEGVEIQNESMTLATITFQNYFRMYEKLSGMTGTAKTEEEEFRNIYNMNVIVIPTNKPIIRDDRADLIFKSMEGKFNAVVEDIVNRHKKGQPVLVGTVAIETSELISKMLTRKGVRHNILNAKNHAREADIIAEAGIKGAVTIATNMAGRGTDIKLGDDVKNVGLAVIGTERHESRRIDNQLRGRAGRQGDPGVTQFYLSMEDELMRRFGSDNMKAMMDRLGMDDSQPIESKMVSRAVESAQKRVEGNNYDARKQLLQYDDVLRQQREVIYKQRQEVMESDNLRGIIEGMMKSTVERAVALHTQEEIEEDWNIKGLVDYLNTNLLQDGDVKEEELRRLAPEEMSEPIIEKLIERYNEKEKLMPEEQMREFEKVVVFRVVDTKWTEHIDAMDHLREGIHLRAYGQIDPLREYQMEGFAMFESMVASIEEEISRYIMKAEIEQNLERQEVVQGEAVHPSSDGEEAKKKPVVKGDQVGRNDLCKCGSGKKYKNCCGIVQ.

ATP is bound by residues glutamine 85, 103 to 107 (GEGKT), and aspartate 492. Residues 788 to 807 (VQGEAVHPSSDGEEAKKKPV) form a disordered region. Zn(2+) contacts are provided by cysteine 819, cysteine 821, cysteine 830, and cysteine 831.

The protein belongs to the SecA family. As to quaternary structure, monomer and homodimer. Part of the essential Sec protein translocation apparatus which comprises SecA, SecYEG and auxiliary proteins SecDF. Other proteins may also be involved. Zn(2+) serves as cofactor.

The protein localises to the cell membrane. Its subcellular location is the cytoplasm. It carries out the reaction ATP + H2O + cellular proteinSide 1 = ADP + phosphate + cellular proteinSide 2.. Its function is as follows. Part of the Sec protein translocase complex. Interacts with the SecYEG preprotein conducting channel. Has a central role in coupling the hydrolysis of ATP to the transfer of proteins into and across the cell membrane, serving as an ATP-driven molecular motor driving the stepwise translocation of polypeptide chains across the membrane. This chain is Protein translocase subunit SecA, found in Bacillus cereus (strain ATCC 14579 / DSM 31 / CCUG 7414 / JCM 2152 / NBRC 15305 / NCIMB 9373 / NCTC 2599 / NRRL B-3711).